A 196-amino-acid polypeptide reads, in one-letter code: Large ribosomal subunit protein bL25 (196 aa).

The interval 177-196 is disordered; the sequence is VISIAPPKKDAEAETESAAG.

The protein belongs to the bacterial ribosomal protein bL25 family. CTC subfamily. As to quaternary structure, part of the 50S ribosomal subunit; part of the 5S rRNA/L5/L18/L25 subcomplex. Contacts the 5S rRNA. Binds to the 5S rRNA independently of L5 and L18.

Its function is as follows. This is one of the proteins that binds to the 5S RNA in the ribosome where it forms part of the central protuberance. The sequence is that of Large ribosomal subunit protein bL25 from Chlorobium limicola (strain DSM 245 / NBRC 103803 / 6330).